The primary structure comprises 481 residues: Polygalacturonase QRT3 (481 aa).

The N-terminal stretch at 1 to 27 (MELRKSQVAMPVFLAIMSLMVSQVVFA) is a signal peptide. 3 PbH1 repeats span residues 203–226 (SLRT…LVKS), 261–282 (GNDN…MVSG), and 356–377 (IRGV…QIVQ). Residues Asn415 and Asn455 are each glycosylated (N-linked (GlcNAc...) asparagine).

Belongs to the glycosyl hydrolase 28 family. In terms of tissue distribution, expressed in the tapetum cells in the anthers and in the ovules of open flowers.

It localises to the secreted. The protein localises to the cell wall. It catalyses the reaction (1,4-alpha-D-galacturonosyl)n+m + H2O = (1,4-alpha-D-galacturonosyl)n + (1,4-alpha-D-galacturonosyl)m.. In terms of biological role, polygalacturonase required for degrading the pollen mother cell wall during microspore development. This is Polygalacturonase QRT3 (QRT3) from Arabidopsis thaliana (Mouse-ear cress).